A 217-amino-acid chain; its full sequence is 3-demethoxyubiquinol 3-hydroxylase (217 aa).

Residues glutamate 66, glutamate 96, histidine 99, glutamate 148, glutamate 180, and histidine 183 each contribute to the Fe cation site.

Belongs to the COQ7 family. Fe cation is required as a cofactor.

It localises to the cell membrane. The enzyme catalyses a 5-methoxy-2-methyl-3-(all-trans-polyprenyl)benzene-1,4-diol + AH2 + O2 = a 3-demethylubiquinol + A + H2O. Its pathway is cofactor biosynthesis; ubiquinone biosynthesis. Functionally, catalyzes the hydroxylation of 2-nonaprenyl-3-methyl-6-methoxy-1,4-benzoquinol during ubiquinone biosynthesis. The sequence is that of 3-demethoxyubiquinol 3-hydroxylase from Xylella fastidiosa (strain 9a5c).